Here is a 231-residue protein sequence, read N- to C-terminus: Phosphatidate cytidylyltransferase (231 aa).

The next 6 membrane-spanning stretches (helical) occupy residues 33–53 (FVVAILWLKPLFYVLMILVAI), 67–87 (IMYLLIGLIIIPIPISLLIFL), 95–115 (WLIMLYFCIVWSVDIFAMIGG), 133–153 (WSGLITGILSAGLVATLISFI), 167–187 (IYLFIISCTLALTAQLSDLFI), and 206–226 (HGGVLDRFDSIILTAPILFFI).

Belongs to the CDS family.

The protein localises to the cell membrane. It carries out the reaction a 1,2-diacyl-sn-glycero-3-phosphate + CTP + H(+) = a CDP-1,2-diacyl-sn-glycerol + diphosphate. It functions in the pathway phospholipid metabolism; CDP-diacylglycerol biosynthesis; CDP-diacylglycerol from sn-glycerol 3-phosphate: step 3/3. In Rickettsia bellii (strain RML369-C), this protein is Phosphatidate cytidylyltransferase (cdsA).